The following is a 557-amino-acid chain: Potassium-transporting ATPase potassium-binding subunit (557 aa).

Helical transmembrane passes span 5 to 25, 63 to 83, 132 to 152, 170 to 190, 253 to 273, 283 to 303, 329 to 349, 356 to 376, 379 to 399, 416 to 436, 484 to 504, and 526 to 546; these read GFLLIATFLLVLMVLARPLGS, LSAILGLNMLGLAVLFFMLLG, GLTVQNFLSAASGIAVIFAFI, LLRITLWVLVPVALLIALFFI, FVQMLAIFLIPTALCFAFGEV, LLWAMSVIFVICVGVVMWAEV, VLVSSLFAVVTTAASCGAVIA, ALGGMVPMWLMQIGEVVFGGV, GLYGMMLFVLLAVFIAGLMIG, LTALAILVTPTLVLMGAALAM, LLAFCMFVGRFGVIIPVMAIA, and LFVGLLIGTVLLVGALTFIPA.

Belongs to the KdpA family. As to quaternary structure, the system is composed of three essential subunits: KdpA, KdpB and KdpC.

It localises to the cell inner membrane. Part of the high-affinity ATP-driven potassium transport (or Kdp) system, which catalyzes the hydrolysis of ATP coupled with the electrogenic transport of potassium into the cytoplasm. This subunit binds the periplasmic potassium ions and delivers the ions to the membrane domain of KdpB through an intramembrane tunnel. This is Potassium-transporting ATPase potassium-binding subunit from Escherichia coli (strain SMS-3-5 / SECEC).